We begin with the raw amino-acid sequence, 273 residues long: Ribosomal RNA small subunit methyltransferase A (273 aa).

Positions 18, 20, 45, 66, 91, and 113 each coordinate S-adenosyl-L-methionine.

The protein belongs to the class I-like SAM-binding methyltransferase superfamily. rRNA adenine N(6)-methyltransferase family. RsmA subfamily.

Its subcellular location is the cytoplasm. The enzyme catalyses adenosine(1518)/adenosine(1519) in 16S rRNA + 4 S-adenosyl-L-methionine = N(6)-dimethyladenosine(1518)/N(6)-dimethyladenosine(1519) in 16S rRNA + 4 S-adenosyl-L-homocysteine + 4 H(+). Specifically dimethylates two adjacent adenosines (A1518 and A1519) in the loop of a conserved hairpin near the 3'-end of 16S rRNA in the 30S particle. May play a critical role in biogenesis of 30S subunits. The protein is Ribosomal RNA small subunit methyltransferase A of Escherichia coli (strain 55989 / EAEC).